A 386-amino-acid polypeptide reads, in one-letter code: L-arabinitol 4-dehydrogenase (386 aa).

8 residues coordinate Zn(2+): C55, H80, E81, C110, C113, C116, C124, and E165. NAD(+)-binding positions include 192 to 193 (PI), D213, R218, I293, and 317 to 319 (QYR).

This sequence belongs to the zinc-containing alcohol dehydrogenase family. In terms of assembly, homotetramer. Zn(2+) is required as a cofactor.

It carries out the reaction L-arabinitol + NAD(+) = L-xylulose + NADH + H(+). The protein operates within carbohydrate degradation; L-arabinose degradation via L-arabinitol; D-xylulose 5-phosphate from L-arabinose (fungal route): step 2/5. Functionally, catalyzes the NAD-dependent oxidation of L-arabinitol to L-xylulose in the fungal L-arabinose catabolic pathway. L-arabinose catabolism is important for using plant material as a carbon source. Not active with NADP as cosubstrate. The sequence is that of L-arabinitol 4-dehydrogenase (ladA) from Aspergillus niger (strain ATCC MYA-4892 / CBS 513.88 / FGSC A1513).